The primary structure comprises 380 residues: MTIMRKNHPLLKIINNSFIDLPTPCNISSWWNFGSLLGICLMVQIITGLFLAMHYTSDTATAFSSVAHICRDVNYGWLIRYMHANGASMFFICLFIHVGRGIYYGSYMLSETWNIGIALFLTTMATAFVGYVLPWGQMSFWGATVITNLLSAIPYIGSTLVEWIWGGFSVDKATLTRFFAFHFILPFIITAFVLVHLLFLHETGSNNPSGLNSDSDKIPFHPYYTIKDILGILMLLMVLMILVLFFPDVLGDPDNYTPANPLNTPAHIKPEWYSSLAYAILRSIPNKLGGVTALILSILILAMFPLINSSKLLGLVYRPITQAMYWIFIANLFILTWIGGQPVEYPFTMIGLISSILYFSIIVMFMFIASMIENNILKSH.

Transmembrane regions (helical) follow at residues 33–53 (FGSL…FLAM), 77–98 (WLIR…FIHV), 113–133 (WNIG…GYVL), and 178–198 (FFAF…VHLL). Residues histidine 83 and histidine 97 each coordinate heme b. Heme b contacts are provided by histidine 182 and histidine 196. Residue histidine 201 coordinates a ubiquinone. 4 helical membrane-spanning segments follow: residues 226–246 (IKDI…VLFF), 288–308 (LGGV…PLIN), 320–340 (ITQA…WIGG), and 347–367 (FTMI…MFMF).

The protein belongs to the cytochrome b family. In terms of assembly, the cytochrome bc1 complex contains 11 subunits: 3 respiratory subunits (MT-CYB, CYC1 and UQCRFS1), 2 core proteins (UQCRC1 and UQCRC2) and 6 low-molecular weight proteins (UQCRH/QCR6, UQCRB/QCR7, UQCRQ/QCR8, UQCR10/QCR9, UQCR11/QCR10 and a cleavage product of UQCRFS1). This cytochrome bc1 complex then forms a dimer. Requires heme b as cofactor.

It localises to the mitochondrion inner membrane. Component of the ubiquinol-cytochrome c reductase complex (complex III or cytochrome b-c1 complex) that is part of the mitochondrial respiratory chain. The b-c1 complex mediates electron transfer from ubiquinol to cytochrome c. Contributes to the generation of a proton gradient across the mitochondrial membrane that is then used for ATP synthesis. This is Cytochrome b (MT-CYB) from Calomys musculinus (Drylands vesper mouse).